The following is a 596-amino-acid chain: Two-component response regulator ARR12 (596 aa).

Residues Arg-18 to Val-133 form the Response regulatory domain. Asp-69 carries the 4-aspartylphosphate modification. Positions Asp-138–Ser-153 are enriched in basic and acidic residues. The interval Asp-138–Ala-192 is disordered. The span at Val-158 to Lys-167 shows a compositional bias: polar residues. Over residues Asn-177–Asp-189 the composition is skewed to acidic residues. The short motif at Lys-194–Arg-197 is the Nuclear localization signal element. Positions Arg-197–Arg-247 form a DNA-binding region, myb-like GARP. A disordered region spans residues Asn-437 to Ser-467. A compositionally biased stretch (polar residues) spans His-450–Phe-459.

The protein belongs to the ARR family. Type-B subfamily. Binds the target DNA as a monomer. In terms of processing, two-component system major event consists of a His-to-Asp phosphorelay between a sensor histidine kinase (HK) and a response regulator (RR). In plants, the His-to-Asp phosphorelay involves an additional intermediate named Histidine-containing phosphotransfer protein (HPt). This multistep phosphorelay consists of a His-Asp-His-Asp sequential transfer of a phosphate group between first a His and an Asp of the HK protein, followed by the transfer to a conserved His of the HPt protein and finally the transfer to an Asp in the receiver domain of the RR protein. Detected in the whole plant. Predominantly expressed in leaves. Expressed at the root transition zone.

It is found in the nucleus. Functionally, transcriptional activator that binds specifically to the DNA sequence 5'-[AG]GATT-3'. Functions as a response regulator involved in His-to-Asp phosphorelay signal transduction system. Phosphorylation of the Asp residue in the receiver domain activates the ability of the protein to promote the transcription of target genes. Could directly activate some type-A response regulators in response to cytokinins. Involved in the root-meristem size determination through the regulation of cell differentiation. Involved in activating SHY2 during meristem growth and controls PIN expression via activation of SHY2. This Arabidopsis thaliana (Mouse-ear cress) protein is Two-component response regulator ARR12 (ARR12).